The sequence spans 819 residues: DNA topoisomerase 4 subunit A (819 aa).

One can recognise a Topo IIA-type catalytic domain in the interval 30 to 496 (LPDIRDGLKP…QIIEIDTASL (467 aa)). The active-site O-(5'-phospho-DNA)-tyrosine intermediate is the Y118.

Belongs to the type II topoisomerase GyrA/ParC subunit family. ParC type 2 subfamily. In terms of assembly, heterotetramer composed of ParC and ParE.

The protein localises to the cell membrane. The catalysed reaction is ATP-dependent breakage, passage and rejoining of double-stranded DNA.. Its function is as follows. Topoisomerase IV is essential for chromosome segregation. It relaxes supercoiled DNA. Performs the decatenation events required during the replication of a circular DNA molecule. The chain is DNA topoisomerase 4 subunit A from Streptococcus pyogenes serotype M1.